The chain runs to 490 residues: Aspartyl/glutamyl-tRNA(Asn/Gln) amidotransferase subunit B (490 aa).

Belongs to the GatB/GatE family. GatB subfamily. As to quaternary structure, heterotrimer of A, B and C subunits.

It carries out the reaction L-glutamyl-tRNA(Gln) + L-glutamine + ATP + H2O = L-glutaminyl-tRNA(Gln) + L-glutamate + ADP + phosphate + H(+). It catalyses the reaction L-aspartyl-tRNA(Asn) + L-glutamine + ATP + H2O = L-asparaginyl-tRNA(Asn) + L-glutamate + ADP + phosphate + 2 H(+). Its function is as follows. Allows the formation of correctly charged Asn-tRNA(Asn) or Gln-tRNA(Gln) through the transamidation of misacylated Asp-tRNA(Asn) or Glu-tRNA(Gln) in organisms which lack either or both of asparaginyl-tRNA or glutaminyl-tRNA synthetases. The reaction takes place in the presence of glutamine and ATP through an activated phospho-Asp-tRNA(Asn) or phospho-Glu-tRNA(Gln). This chain is Aspartyl/glutamyl-tRNA(Asn/Gln) amidotransferase subunit B, found in Methylorubrum extorquens (strain PA1) (Methylobacterium extorquens).